We begin with the raw amino-acid sequence, 171 residues long: ATP synthase subunit b (171 aa).

The chain crosses the membrane as a helical span at residues 32 to 52 (FFAVLLIFLIVLGVIAKWVVP).

This sequence belongs to the ATPase B chain family. F-type ATPases have 2 components, F(1) - the catalytic core - and F(0) - the membrane proton channel. F(1) has five subunits: alpha(3), beta(3), gamma(1), delta(1), epsilon(1). F(0) has three main subunits: a(1), b(2) and c(10-14). The alpha and beta chains form an alternating ring which encloses part of the gamma chain. F(1) is attached to F(0) by a central stalk formed by the gamma and epsilon chains, while a peripheral stalk is formed by the delta and b chains.

The protein localises to the cell membrane. F(1)F(0) ATP synthase produces ATP from ADP in the presence of a proton or sodium gradient. F-type ATPases consist of two structural domains, F(1) containing the extramembraneous catalytic core and F(0) containing the membrane proton channel, linked together by a central stalk and a peripheral stalk. During catalysis, ATP synthesis in the catalytic domain of F(1) is coupled via a rotary mechanism of the central stalk subunits to proton translocation. Its function is as follows. Component of the F(0) channel, it forms part of the peripheral stalk, linking F(1) to F(0). This chain is ATP synthase subunit b, found in Mycolicibacterium gilvum (strain PYR-GCK) (Mycobacterium gilvum (strain PYR-GCK)).